The following is a 453-amino-acid chain: Protein LOW PSII ACCUMULATION 1, chloroplastic (453 aa).

A chloroplast-targeting transit peptide spans 1 to 92 (MAVATAPSLN…LDLFKRGRVK (92 aa)). TPR repeat units follow at residues 75–108 (AELC…APNP) and 112–145 (QAAY…YNLK). 2 helical membrane-spanning segments follow: residues 202-222 (FFYF…VPRL) and 238-258 (TTGN…LFLW).

Interacts with psbA, but not with psbD, petB, ALB3, LPA2 or LPA3. Is not a component of the PSII complex.

It localises to the plastid. The protein resides in the chloroplast thylakoid membrane. Chaperone required for efficient photosystem II (PSII) assembly. Binds to psbA during de novo biogenesis of PSII. The protein is Protein LOW PSII ACCUMULATION 1, chloroplastic (LPA1) of Arabidopsis thaliana (Mouse-ear cress).